A 185-amino-acid polypeptide reads, in one-letter code: Endoribonuclease YbeY (185 aa).

Zn(2+)-binding residues include His135, His139, and His145.

The protein belongs to the endoribonuclease YbeY family. Requires Zn(2+) as cofactor.

Its subcellular location is the cytoplasm. In terms of biological role, single strand-specific metallo-endoribonuclease involved in late-stage 70S ribosome quality control and in maturation of the 3' terminus of the 16S rRNA. In Parasynechococcus marenigrum (strain WH8102), this protein is Endoribonuclease YbeY.